We begin with the raw amino-acid sequence, 587 residues long: DNA ligase (587 aa).

NAD(+) contacts are provided by residues 32–36 (DILYD), 84–85 (SL), and Asp-116. Catalysis depends on Lys-118, which acts as the N6-AMP-lysine intermediate. Positions 139, 176, 293, and 317 each coordinate NAD(+). Zn(2+) is bound by residues Cys-411, Cys-414, Cys-429, and Cys-435.

This sequence belongs to the NAD-dependent DNA ligase family. LigA subfamily. It depends on Mg(2+) as a cofactor. Mn(2+) serves as cofactor.

The enzyme catalyses NAD(+) + (deoxyribonucleotide)n-3'-hydroxyl + 5'-phospho-(deoxyribonucleotide)m = (deoxyribonucleotide)n+m + AMP + beta-nicotinamide D-nucleotide.. Functionally, DNA ligase that catalyzes the formation of phosphodiester linkages between 5'-phosphoryl and 3'-hydroxyl groups in double-stranded DNA using NAD as a coenzyme and as the energy source for the reaction. It is essential for DNA replication and repair of damaged DNA. The sequence is that of DNA ligase from Buchnera aphidicola subsp. Cinara cedri (strain Cc).